We begin with the raw amino-acid sequence, 363 residues long: Inositol-3-phosphate synthase (363 aa).

The NAD(+) site is built by D68, A127, Y147, S190, D225, and K238.

The protein belongs to the myo-inositol 1-phosphate synthase family. Monomer. NAD(+) serves as cofactor.

The enzyme catalyses D-glucose 6-phosphate = 1D-myo-inositol 3-phosphate. It functions in the pathway polyol metabolism; myo-inositol biosynthesis; myo-inositol from D-glucose 6-phosphate: step 1/2. In terms of biological role, key enzyme in myo-inositol biosynthesis pathway that catalyzes the conversion of glucose 6-phosphate to 1D-myo-inositol 3-phosphate in a NAD-dependent manner. Plays a key role in oxidative stress resistance as its product is the precursor of the protective antioxidant mycothiol (MSH or AcCys-GlcN-Ins). The sequence is that of Inositol-3-phosphate synthase from Corynebacterium glutamicum (strain ATCC 13032 / DSM 20300 / JCM 1318 / BCRC 11384 / CCUG 27702 / LMG 3730 / NBRC 12168 / NCIMB 10025 / NRRL B-2784 / 534).